The sequence spans 363 residues: 3,4-dihydroxy-2-butanone 4-phosphate synthase (363 aa).

The tract at residues 1–201 is DHBP synthase; that stretch reads MTLSTAQEII…VADLIEYRNK (201 aa). D-ribulose 5-phosphate-binding positions include 27–28, Asp32, 140–144, and Glu164; these read RE and RAGHT. Residue Glu28 coordinates Mg(2+). Residue His143 coordinates Mg(2+). The interval 202–363 is GTP cyclohydrolase II-like; the sequence is YETMIERISE…GLEIVEYVCS (162 aa).

This sequence in the N-terminal section; belongs to the DHBP synthase family. The protein in the C-terminal section; belongs to the GTP cyclohydrolase II family. It depends on Mg(2+) as a cofactor. The cofactor is Mn(2+).

It carries out the reaction D-ribulose 5-phosphate = (2S)-2-hydroxy-3-oxobutyl phosphate + formate + H(+). Its pathway is cofactor biosynthesis; riboflavin biosynthesis; 2-hydroxy-3-oxobutyl phosphate from D-ribulose 5-phosphate: step 1/1. Catalyzes the conversion of D-ribulose 5-phosphate to formate and 3,4-dihydroxy-2-butanone 4-phosphate. The chain is 3,4-dihydroxy-2-butanone 4-phosphate synthase (ribB) from Photobacterium phosphoreum.